We begin with the raw amino-acid sequence, 82 residues long: Small ribosomal subunit protein bS18 (82 aa).

This sequence belongs to the bacterial ribosomal protein bS18 family. As to quaternary structure, part of the 30S ribosomal subunit. Forms a tight heterodimer with protein bS6.

Binds as a heterodimer with protein bS6 to the central domain of the 16S rRNA, where it helps stabilize the platform of the 30S subunit. The polypeptide is Small ribosomal subunit protein bS18 (Rhizobium rhizogenes (strain K84 / ATCC BAA-868) (Agrobacterium radiobacter)).